A 719-amino-acid chain; its full sequence is Cyclin-dependent kinase 11.1 (719 aa).

Basic and acidic residues-rich tracts occupy residues 1-20 (MSDHLGSSHDEGELSDESHK), 38-48 (KGLESKMRESI), and 78-129 (KAKE…DQKV). Disordered stretches follow at residues 1 to 215 (MSDH…KDDD) and 231 to 315 (EEKE…EMTE). Positions 130 to 140 (HEHRHHHHHRK) are enriched in basic residues. Residues 141–163 (HETDGHRTNRSNRDRSSERDSEK) show a composition bias toward basic and acidic residues. Basic residues predominate over residues 164-174 (HKRHIDRHKKS). 2 stretches are compositionally biased toward basic and acidic residues: residues 191 to 215 (HTDVPADAKLFDRILDPNYKKKDDD) and 264 to 274 (DDTKPKSPGKA). Acidic residues predominate over residues 275 to 285 (EDDDDVIEVLD). Residues 356 to 647 (YECVNRVDEG…ATQALDHEWF (292 aa)) form the Protein kinase domain. Residues 362–370 (VDEGTFGVV) and lysine 385 contribute to the ATP site. The active-site Proton acceptor is aspartate 484. A disordered region spans residues 657-689 (EEFPTFPAKSEQNKAPPPAKQKQQENRISHVDP). The span at 678–689 (KQQENRISHVDP) shows a compositional bias: basic and acidic residues.

It belongs to the protein kinase superfamily. CMGC Ser/Thr protein kinase family. CDC2/CDKX subfamily. Broadly expressed in somatic and germ line cells (at protein level). Not expressed in sperm (at protein level).

The protein resides in the nucleus. It catalyses the reaction L-seryl-[protein] + ATP = O-phospho-L-seryl-[protein] + ADP + H(+). The catalysed reaction is L-threonyl-[protein] + ATP = O-phospho-L-threonyl-[protein] + ADP + H(+). Functionally, probable cyclin-dependent kinase whose activity is most likely regulated by the cyclin cyl-1/Cylin-L. Important for normal oocyte and sperm development; probably required during multiple stages of gametogenesis. Plays a role in the activation of RAS-ERK signaling in the germ line. Also acts partially redundantly with cdk-11.2 to ensure embryonic viability. This Caenorhabditis elegans protein is Cyclin-dependent kinase 11.1.